The sequence spans 366 residues: UDP-N-acetylglucosamine--N-acetylmuramyl-(pentapeptide) pyrophosphoryl-undecaprenol N-acetylglucosamine transferase (366 aa).

Residues 14-16, asparagine 125, arginine 168, serine 196, and glutamine 297 each bind UDP-N-acetyl-alpha-D-glucosamine; that span reads TGG.

It belongs to the glycosyltransferase 28 family. MurG subfamily.

The protein localises to the cell inner membrane. It carries out the reaction di-trans,octa-cis-undecaprenyl diphospho-N-acetyl-alpha-D-muramoyl-L-alanyl-D-glutamyl-meso-2,6-diaminopimeloyl-D-alanyl-D-alanine + UDP-N-acetyl-alpha-D-glucosamine = di-trans,octa-cis-undecaprenyl diphospho-[N-acetyl-alpha-D-glucosaminyl-(1-&gt;4)]-N-acetyl-alpha-D-muramoyl-L-alanyl-D-glutamyl-meso-2,6-diaminopimeloyl-D-alanyl-D-alanine + UDP + H(+). The protein operates within cell wall biogenesis; peptidoglycan biosynthesis. Functionally, cell wall formation. Catalyzes the transfer of a GlcNAc subunit on undecaprenyl-pyrophosphoryl-MurNAc-pentapeptide (lipid intermediate I) to form undecaprenyl-pyrophosphoryl-MurNAc-(pentapeptide)GlcNAc (lipid intermediate II). In Bradyrhizobium diazoefficiens (strain JCM 10833 / BCRC 13528 / IAM 13628 / NBRC 14792 / USDA 110), this protein is UDP-N-acetylglucosamine--N-acetylmuramyl-(pentapeptide) pyrophosphoryl-undecaprenol N-acetylglucosamine transferase.